A 124-amino-acid chain; its full sequence is MLIKILEEKLMELIQIVGVIFALFALSRVVLQLKRRSISFNEGLFWIFVWGFVVIFLVFPEFFGYVAEVLGVGRGVDALIYISIVVLFYLIYRLYAKINNLERQITHIVREIAIRDRYEPKKRD.

The next 3 membrane-spanning stretches (helical) occupy residues 13–33, 43–63, and 71–91; these read LIQIVGVIFALFALSRVVLQL, GLFWIFVWGFVVIFLVFPEFF, and GVGRGVDALIYISIVVLFYLI.

It to M.thermoautotrophicum MTH137.

Its subcellular location is the cell membrane. This is an uncharacterized protein from Methanocaldococcus jannaschii (strain ATCC 43067 / DSM 2661 / JAL-1 / JCM 10045 / NBRC 100440) (Methanococcus jannaschii).